The sequence spans 265 residues: Indole-3-glycerol phosphate synthase (265 aa).

Belongs to the TrpC family.

The catalysed reaction is 1-(2-carboxyphenylamino)-1-deoxy-D-ribulose 5-phosphate + H(+) = (1S,2R)-1-C-(indol-3-yl)glycerol 3-phosphate + CO2 + H2O. It participates in amino-acid biosynthesis; L-tryptophan biosynthesis; L-tryptophan from chorismate: step 4/5. The chain is Indole-3-glycerol phosphate synthase from Desulforamulus reducens (strain ATCC BAA-1160 / DSM 100696 / MI-1) (Desulfotomaculum reducens).